A 49-amino-acid chain; its full sequence is Large ribosomal subunit protein bL33B (49 aa).

Belongs to the bacterial ribosomal protein bL33 family.

The sequence is that of Large ribosomal subunit protein bL33B from Acholeplasma laidlawii (strain PG-8A).